The chain runs to 361 residues: Chorismate synthase (361 aa).

NADP(+) contacts are provided by Arg48 and Arg54. Residues 125–127 (RSS), 238–239 (NA), Gly278, 293–297 (KPTSS), and Arg319 each bind FMN.

This sequence belongs to the chorismate synthase family. In terms of assembly, homotetramer. The cofactor is FMNH2.

It carries out the reaction 5-O-(1-carboxyvinyl)-3-phosphoshikimate = chorismate + phosphate. It participates in metabolic intermediate biosynthesis; chorismate biosynthesis; chorismate from D-erythrose 4-phosphate and phosphoenolpyruvate: step 7/7. Catalyzes the anti-1,4-elimination of the C-3 phosphate and the C-6 proR hydrogen from 5-enolpyruvylshikimate-3-phosphate (EPSP) to yield chorismate, which is the branch point compound that serves as the starting substrate for the three terminal pathways of aromatic amino acid biosynthesis. This reaction introduces a second double bond into the aromatic ring system. The sequence is that of Chorismate synthase from Shigella flexneri serotype 5b (strain 8401).